Consider the following 290-residue polypeptide: Arylamine N-acetyltransferase 1 (290 aa).

Met1 is modified (N-acetylmethionine). Cys68 serves as the catalytic Acyl-thioester intermediate. 2 residues coordinate CoA: Thr103 and Gly104. 106-107 (IH) is a binding site for substrate. Catalysis depends on residues His107 and Asp122. 2 residues coordinate CoA: Tyr208 and Ser214.

This sequence belongs to the arylamine N-acetyltransferase family.

The protein resides in the cytoplasm. The enzyme catalyses an arylamine + acetyl-CoA = an N-acetylarylamine + CoA. This chain is Arylamine N-acetyltransferase 1 (NAT1), found in Oryctolagus cuniculus (Rabbit).